The sequence spans 80 residues: Conotoxin MaIr193 (80 aa).

Positions 1–22 are cleaved as a signal peptide; the sequence is MKLTCMMIVAVLFLTAWTLVTA. The propeptide occupies 23 to 51; that stretch reads DGTRDGLKNRFPKARLEMKNSEAPRSRGR. Intrachain disulfides connect Cys52/Cys69, Cys59/Cys73, and Cys68/Cys77. Pro64 carries the post-translational modification 4-hydroxyproline.

This sequence belongs to the conotoxin O1 superfamily. In terms of tissue distribution, expressed by the venom duct.

The protein resides in the secreted. In Conus marmoreus (Marble cone), this protein is Conotoxin MaIr193.